A 190-amino-acid chain; its full sequence is Myophilin (190 aa).

Residues 1–23 (MSNVPPPSGLSYQVKKKLEGKRD) are disordered. One can recognise a Calponin-homology (CH) domain in the interval 24–130 (KDQENEALEW…RTLFALGRTC (107 aa)). One copy of the Calponin-like repeat lies at 165-189 (VSLQYGSNKGASQAGINMGKQRMIM).

The protein belongs to the calponin family. Muscle specific.

This is Myophilin from Echinococcus granulosus (Hydatid tapeworm).